The sequence spans 243 residues: Small ribosomal subunit protein uS3 (243 aa).

The KH type-2 domain occupies Ile-39 to Glu-110. The interval Gln-216–Lys-243 is disordered. The span at Gln-233–Lys-243 shows a compositional bias: basic and acidic residues.

This sequence belongs to the universal ribosomal protein uS3 family. In terms of assembly, part of the 30S ribosomal subunit. Forms a tight complex with proteins S10 and S14.

Its function is as follows. Binds the lower part of the 30S subunit head. Binds mRNA in the 70S ribosome, positioning it for translation. The polypeptide is Small ribosomal subunit protein uS3 (Prochlorococcus marinus (strain SARG / CCMP1375 / SS120)).